Consider the following 166-residue polypeptide: 3-isopropylmalate dehydratase small subunit (166 aa).

It belongs to the LeuD family. LeuD type 2 subfamily. Heterodimer of LeuC and LeuD.

It catalyses the reaction (2R,3S)-3-isopropylmalate = (2S)-2-isopropylmalate. It functions in the pathway amino-acid biosynthesis; L-leucine biosynthesis; L-leucine from 3-methyl-2-oxobutanoate: step 2/4. In terms of biological role, catalyzes the isomerization between 2-isopropylmalate and 3-isopropylmalate, via the formation of 2-isopropylmaleate. The sequence is that of 3-isopropylmalate dehydratase small subunit from Caldicellulosiruptor bescii (strain ATCC BAA-1888 / DSM 6725 / KCTC 15123 / Z-1320) (Anaerocellum thermophilum).